Consider the following 433-residue polypeptide: Gamma-glutamyl phosphate reductase (433 aa).

Belongs to the gamma-glutamyl phosphate reductase family.

The protein resides in the cytoplasm. It carries out the reaction L-glutamate 5-semialdehyde + phosphate + NADP(+) = L-glutamyl 5-phosphate + NADPH + H(+). It functions in the pathway amino-acid biosynthesis; L-proline biosynthesis; L-glutamate 5-semialdehyde from L-glutamate: step 2/2. In terms of biological role, catalyzes the NADPH-dependent reduction of L-glutamate 5-phosphate into L-glutamate 5-semialdehyde and phosphate. The product spontaneously undergoes cyclization to form 1-pyrroline-5-carboxylate. The protein is Gamma-glutamyl phosphate reductase of Rhodopseudomonas palustris (strain BisB18).